A 334-amino-acid polypeptide reads, in one-letter code: Probable 2-ketogluconate reductase (334 aa).

Residues 164-165, 244-246, and D270 each bind NAD(+); these read RI and AGR. The active site involves R246. E275 is an active-site residue. H294 functions as the Proton donor in the catalytic mechanism. 294 to 297 contributes to the NAD(+) binding site; it reads HIGT.

The protein belongs to the D-isomer specific 2-hydroxyacid dehydrogenase family.

The protein localises to the cytoplasm. The catalysed reaction is D-gluconate + NADP(+) = 2-dehydro-D-gluconate + NADPH + H(+). Functionally, catalyzes the NADPH-dependent reduction of 2,5-diketo-D-gluconate (25DKG) to 5-keto-D-gluconate (5KDG), 2-keto-D-gluconate (2KDG) to D-gluconate, and 2-keto-L-gulonate (2KLG) to L-idonate (IA). In Dictyostelium discoideum (Social amoeba), this protein is Probable 2-ketogluconate reductase (tkrA).